Here is a 124-residue protein sequence, read N- to C-terminus: Predicted GPI-anchored protein 11 (124 aa).

The first 18 residues, 1-18, serve as a signal peptide directing secretion; that stretch reads MKFQFVTALALASTMAVA. Residues 38–59 form a disordered region; sequence REGGSTGAELQDNNQPTAGLFG. Ser107 is lipidated: GPI-anchor amidated serine. Residues 108 to 124 constitute a propeptide, removed in mature form; sequence GAAGGVGNLFSGILGGL.

It is found in the cell membrane. This is Predicted GPI-anchored protein 11 (PGA11) from Candida albicans (strain SC5314 / ATCC MYA-2876) (Yeast).